A 459-amino-acid chain; its full sequence is ATP-dependent protease ATPase subunit HslU (459 aa).

ATP-binding positions include V18, 60–65 (GVGKTE), D269, E337, and R409.

The protein belongs to the ClpX chaperone family. HslU subfamily. As to quaternary structure, a double ring-shaped homohexamer of HslV is capped on each side by a ring-shaped HslU homohexamer. The assembly of the HslU/HslV complex is dependent on binding of ATP.

The protein localises to the cytoplasm. ATPase subunit of a proteasome-like degradation complex; this subunit has chaperone activity. The binding of ATP and its subsequent hydrolysis by HslU are essential for unfolding of protein substrates subsequently hydrolyzed by HslV. HslU recognizes the N-terminal part of its protein substrates and unfolds these before they are guided to HslV for hydrolysis. The polypeptide is ATP-dependent protease ATPase subunit HslU (Myxococcus xanthus (strain DK1622)).